The following is a 2453-amino-acid chain: Nuclear receptor corepressor 1 (2453 aa).

Over residues 1-29 (MSSSGYPPNQGAFSTEQSRYPSHSVQYTF) the composition is skewed to polar residues. 3 disordered regions span residues 1 to 116 (MSSS…QVSD), 147 to 177 (PAFG…SKLS), and 206 to 231 (QQQL…VEQK). The tract at residues 1 to 373 (MSSSGYPPNQ…QRGAGLSATI (373 aa)) is interaction with ZBTB33 and HEXIM1. Over residues 51 to 64 (SQASQLLQQQQQQQ) the composition is skewed to low complexity. Basic and acidic residues-rich tracts occupy residues 77–88 (PGSDRPQERRSG) and 99–116 (VDHD…QVSD). At serine 172 the chain carries Phosphoserine. The stretch at 174 to 216 (SKLSKEELIQSMDRVDREIAKVEQQILKLKKKQQQLEEEAAKP) forms a coiled coil. Residues 212–221 (EAAKPPEPEK) are compositionally biased toward basic and acidic residues. Residue serine 224 is modified to Phosphoserine. Positions 254–312 (FEGLGPKVELPLYNQPSDTKVYHENIKTNQVMRKKLILFFKRRNHARKQREQKICQRYD) are interaction with SIN3A/B. Residues 299–328 (ARKQREQKICQRYDQLMEAWEKKVDRIENN) are a coiled coil. One can recognise an SANT 1 domain in the interval 435–486 (QFMNVWTDHEKEIFKDKFIQHPKNFGLIASYLERKSVPDCVLYYYLTKKNEN). Disordered stretches follow at residues 497–631 (KRRG…TEEE) and 677–908 (LLQQ…PERQ). Residues 501-550 (RNQQIARPSQEEKVEEKEEDKAEKTEKKEEEKKDDEEKDDKEDSKETTKE) adopt a coiled-coil conformation. Basic and acidic residues-rich tracts occupy residues 509 to 531 (SQEE…KEEE) and 541 to 556 (KEDS…RTEA). Over residues 592-604 (EAAAANAAAAATE) the composition is skewed to low complexity. The segment covering 605-616 (EPPPPLPPPPEP) has biased composition (pro residues). Positions 622–673 (VETSRWTEEEMEVAKKGLVEHGRNWAAIAKMVGTKSEAQCKNFYFNYKRRHN) constitute an SANT 2 domain. Residues 697 to 707 (QCESVASTVSA) show a composition bias toward polar residues. A compositionally biased stretch (acidic residues) spans 708–727 (QEDEDIEASNEEENPEDSEG). Low complexity predominate over residues 771-787 (TTDPAPCASPSSAVPTT). Residues 851–885 (GEGDAKERDLESTSEKTEARDEDVVVAEQIERPEP) show a composition bias toward basic and acidic residues. The residue at position 1011 (serine 1011) is a Phosphoserine. The interval 1034-1058 (VRLPTTRPTRPPPPLIPSSKTTVAS) is disordered. Residue lysine 1117 forms a Glycyl lysine isopeptide (Lys-Gly) (interchain with G-Cter in SUMO1); alternate linkage. Residue lysine 1117 forms a Glycyl lysine isopeptide (Lys-Gly) (interchain with G-Cter in SUMO2); alternate linkage. Serine 1122 carries the post-translational modification Phosphoserine. A Glycyl lysine isopeptide (Lys-Gly) (interchain with G-Cter in SUMO2) cross-link involves residue lysine 1195. A phosphoserine mark is found at serine 1206, serine 1207, serine 1274, serine 1292, and serine 1333. Lysine 1347 is modified (N6-acetyllysine). Threonine 1378 is modified (phosphothreonine). Lysine 1400 is covalently cross-linked (Glycyl lysine isopeptide (Lys-Gly) (interchain with G-Cter in SUMO2)). Lysine 1423 participates in a covalent cross-link: Glycyl lysine isopeptide (Lys-Gly) (interchain with G-Cter in SUMO2); alternate. At lysine 1423 the chain carries N6-acetyllysine; alternate. The interval 1450–1544 (GEPVRARHTS…SIPAKSPVPG (95 aa)) is disordered. A phosphoserine mark is found at serine 1459 and serine 1481. Residues 1459–1469 (SVVSSGPSVLR) show a composition bias toward polar residues. Polar residues predominate over residues 1495–1514 (VSYQNTISRGSPMMNRTSDV). The segment at 1510 to 2453 (RTSDVSSSKS…QYETLSDSDD (944 aa)) is interaction with C1D. A Glycyl lysine isopeptide (Lys-Gly) (interchain with G-Cter in SUMO2) cross-link involves residue lysine 1525. Residue serine 1598 is modified to Phosphoserine. Disordered stretches follow at residues 1697–1780 (RPYN…VRTQ) and 1902–1939 (ALPS…RTRG). 2 stretches are compositionally biased toward basic and acidic residues: residues 1718 to 1745 (AERE…RERI) and 1919 to 1937 (AGKD…ELRT). A CORNR box 1 motif is present at residues 1949–1953 (IDVII). Residues 1959-2060 (SDKDARERGS…SSQSEGMGQV (102 aa)) are disordered. The span at 1968 to 1979 (SQSSDSSSSLSS) shows a compositional bias: low complexity. Residues serine 1993 and serine 1997 each carry the phosphoserine modification. The ID1 stretch occupies residues 2050-2129 (PSSQSEGMGQ…QSQTVLHPRP (80 aa)). The interval 2065–2068 (RLIT) is required for interaction with RARA in the absence of its ligand. Residues 2073–2077 (ICQII) carry the CORNR box 2 motif. Polar residues predominate over residues 2088–2124 (SQASTSTFQTSPSALSSTPVRTKTSSRYSPESQSQTV). Residues 2088–2174 (SQASTSTFQT…SPPQGPAVHE (87 aa)) form a disordered region. A phosphoserine mark is found at serine 2116, serine 2134, serine 2150, serine 2165, and serine 2198. Positions 2138-2156 (LVDKSRGSRPGKSPERSHI) are enriched in basic and acidic residues. The ID2 stretch occupies residues 2226–2287 (IFRKLNSSGG…EDIIRKALMG (62 aa)). The CORNR box 3 motif lies at 2277–2281 (LEDII). The interval 2303-2396 (PVGIMPGSAS…RPSSTGSTQF (94 aa)) is disordered. Low complexity predominate over residues 2310-2319 (SASTSVVTSS). Threonine 2412 carries the post-translational modification Phosphothreonine. Phosphoserine occurs at positions 2449 and 2451.

The protein belongs to the N-CoR nuclear receptor corepressors family. As to quaternary structure, forms a large corepressor complex that contains SIN3A/B and histone deacetylases HDAC1 and HDAC2. This complex associates with the thyroid receptor (TR) and the retinoid acid receptor (RAR) in the absence of ligand. Interacts directly with RARA; the interaction is facilitated with RARA trimethylation. Component of the N-Cor repressor complex, at least composed of CBFA2T3, HEXIM1, NCOR1, NCOR2, HDAC3, TBL1X, TBL1XR1, CORO2A and GPS2. Interacts with ZBTB33; the interaction serves to recruit the N-CoR complex to promoter regions containing methylated CpG dinucleotides. Interacts with TRIM28 and KDM3A. Interacts (via the RD1 domain) with BAZ1A (via its N-terminal); the interaction corepresses a number of NCOR1-regulated genes. Interacts with BCL6, C1D, DACH1, HEXIM1, HDAC7, RORA, RORC, SAP30, SIAH2, SIN3A and SIN3B. May interact with DEAF1. Interacts with RXRA. Interacts with SETD5. Interacts with VDR. Interacts with ZBTB7A. Interacts with AR. Interacts with HDAC3. In terms of processing, ubiquitinated; mediated by SIAH2 and leading to its subsequent proteasomal degradation. Ubiquitous.

The protein localises to the nucleus. In terms of biological role, mediates transcriptional repression by certain nuclear receptors. Part of a complex which promotes histone deacetylation and the formation of repressive chromatin structures which may impede the access of basal transcription factors. Participates in the transcriptional repressor activity produced by BCL6. Recruited by ZBTB7A to the androgen response elements/ARE on target genes, negatively regulates androgen receptor signaling and androgen-induced cell proliferation. Mediates the NR1D1-dependent repression and circadian regulation of TSHB expression. The NCOR1-HDAC3 complex regulates the circadian expression of the core clock gene ARTNL/BMAL1 and the genes involved in lipid metabolism in the liver. In Mus musculus (Mouse), this protein is Nuclear receptor corepressor 1 (Ncor1).